Reading from the N-terminus, the 166-residue chain is Small ribosomal subunit protein uS5 (166 aa).

The S5 DRBM domain maps to 12-75 (YIEKLVQVNR…EAARRNMIQV (64 aa)).

This sequence belongs to the universal ribosomal protein uS5 family. Part of the 30S ribosomal subunit. Contacts proteins S4 and S8.

In terms of biological role, with S4 and S12 plays an important role in translational accuracy. Its function is as follows. Located at the back of the 30S subunit body where it stabilizes the conformation of the head with respect to the body. The polypeptide is Small ribosomal subunit protein uS5 (Pseudomonas syringae pv. tomato (strain ATCC BAA-871 / DC3000)).